The following is a 474-amino-acid chain: Coiled-coil domain-containing protein 174 (474 aa).

2 disordered regions span residues 39–86 (GVFG…REKL) and 129–170 (GATR…PSEE). Basic and acidic residues-rich tracts occupy residues 64-86 (RAEK…REKL) and 129-142 (GATR…ERDA). Positions 64 to 98 (RAEKDAEQKLEEQKTLDKSREKLEEKAKLYEKMTK) form a coiled coil. A compositionally biased stretch (acidic residues) spans 148-157 (NDDDDEEEFS). At Ser206 the chain carries Phosphoserine. Residues 276–317 (LEMLREQTTDQRIKRENIKEKRKAILEARLAKLRQKKMKKSK) are a coiled coil. 2 disordered regions span residues 309-372 (RQKK…IREW) and 389-461 (ELRA…VTFQ). 2 stretches are compositionally biased toward basic and acidic residues: residues 316–327 (SKVDGTEEESRA) and 356–372 (IQER…IREW). Polar residues predominate over residues 410 to 419 (RTGSLSSQPW). The segment covering 430–453 (GHSSGQSQEPSSSHTSTPASESSP) has biased composition (low complexity).

It localises to the nucleus. Functionally, probably involved in neuronal development. The protein is Coiled-coil domain-containing protein 174 (Ccdc174) of Rattus norvegicus (Rat).